A 566-amino-acid polypeptide reads, in one-letter code: KsdD-like steroid dehydrogenase Rv0785 (566 aa).

An FAD-binding site is contributed by 23-54; sequence DAIVVGAGLAGLVAACELADRGLRVLILDQEN.

Belongs to the FAD-dependent oxidoreductase 2 family. FAD serves as cofactor.

Its pathway is lipid metabolism; steroid biosynthesis. Functionally, able to catalyze the elimination of the C-1 and C-2 hydrogen atoms of the A-ring from the polycyclic ring structure of 3-ketosteroids. The polypeptide is KsdD-like steroid dehydrogenase Rv0785 (Mycobacterium tuberculosis (strain ATCC 25618 / H37Rv)).